Consider the following 361-residue polypeptide: Cyclin-dependent kinase 10 (361 aa).

Residues 37-321 (FEKLNRIGEG…AGDCLESSYF (285 aa)) enclose the Protein kinase domain. ATP-binding positions include 43-51 (IGEGTYGIV) and lysine 66. Aspartate 161 (proton acceptor) is an active-site residue. Threonine 194 carries the phosphothreonine modification. Residues 332–361 (LMPTFPHHRNKRATPATSLGTESQSRRGRP) form a disordered region.

This sequence belongs to the protein kinase superfamily. CMGC Ser/Thr protein kinase family. CDC2/CDKX subfamily. Heterodimer with CCNQ, the interaction is required for kinase activity. Interacts with ETS2. Interacts with PRK2.

It is found in the cytoplasm. The protein resides in the cytoskeleton. It localises to the cilium basal body. It catalyses the reaction L-seryl-[protein] + ATP = O-phospho-L-seryl-[protein] + ADP + H(+). The enzyme catalyses L-threonyl-[protein] + ATP = O-phospho-L-threonyl-[protein] + ADP + H(+). Cyclin-dependent kinase that phosphorylates the transcription factor ETS2 (in vitro) and positively controls its proteasomal degradation (in cells). Involved in the regulation of actin cytoskeleton organization through the phosphorylation of actin dynamics regulators such as PKN2. Is a negative regulator of ciliogenesis through phosphorylation of PKN2 and promotion of RhoA signaling. This chain is Cyclin-dependent kinase 10 (CDK10), found in Bos taurus (Bovine).